The following is a 317-amino-acid chain: tRNA uridine(34) hydroxylase (317 aa).

Positions 123–217 constitute a Rhodanese domain; it reads EDDDTIVIDA…YGKDPETKGE (95 aa). The active-site Cysteine persulfide intermediate is C177.

Belongs to the TrhO family.

It catalyses the reaction uridine(34) in tRNA + AH2 + O2 = 5-hydroxyuridine(34) in tRNA + A + H2O. Functionally, catalyzes oxygen-dependent 5-hydroxyuridine (ho5U) modification at position 34 in tRNAs. The sequence is that of tRNA uridine(34) hydroxylase from Staphylococcus carnosus (strain TM300).